We begin with the raw amino-acid sequence, 169 residues long: Cilia- and flagella-associated protein HOATZ (169 aa).

3 disordered regions span residues 1–21 (METG…MCPP), 52–89 (SQLV…LASN), and 144–169 (KAKE…KTLD). Residues 75 to 89 (SENSHSSQSFHLASN) show a composition bias toward polar residues.

The protein belongs to the HOATZ family.

The protein localises to the cytoplasm. Its subcellular location is the cell projection. The protein resides in the cilium. In terms of biological role, required for motile ciliogenesis and flagellar genesis by mediating the maturation of the glycolytic enzyme ENO4. This Homo sapiens (Human) protein is Cilia- and flagella-associated protein HOATZ.